The sequence spans 336 residues: Peroxidase 11 (336 aa).

A signal peptide spans 1–20 (MMRLLFVFFMVHTIFIPCFS). Intrachain disulfides connect C39–C119, C72–C77, C125–C331, and C204–C236. H70 (proton acceptor) is an active-site residue. Positions 71, 74, 76, 78, and 80 each coordinate Ca(2+). P167 is a substrate binding site. H197 lines the heme b pocket. Ca(2+) is bound at residue T198. N-linked (GlcNAc...) asparagine glycosylation is present at N246. 3 residues coordinate Ca(2+): D251, T254, and D259.

This sequence belongs to the peroxidase family. Classical plant (class III) peroxidase subfamily. Requires heme b as cofactor. Ca(2+) serves as cofactor. As to expression, expressed in roots and stems.

It is found in the secreted. It catalyses the reaction 2 a phenolic donor + H2O2 = 2 a phenolic radical donor + 2 H2O. Its function is as follows. Removal of H(2)O(2), oxidation of toxic reductants, biosynthesis and degradation of lignin, suberization, auxin catabolism, response to environmental stresses such as wounding, pathogen attack and oxidative stress. These functions might be dependent on each isozyme/isoform in each plant tissue. The sequence is that of Peroxidase 11 (PER11) from Arabidopsis thaliana (Mouse-ear cress).